Reading from the N-terminus, the 207-residue chain is Peptidyl-tRNA hydrolase (207 aa).

TRNA is bound at residue Tyr19. The active-site Proton acceptor is His24. Positions 70, 72, and 118 each coordinate tRNA.

This sequence belongs to the PTH family. In terms of assembly, monomer.

Its subcellular location is the cytoplasm. It carries out the reaction an N-acyl-L-alpha-aminoacyl-tRNA + H2O = an N-acyl-L-amino acid + a tRNA + H(+). Its function is as follows. Hydrolyzes ribosome-free peptidyl-tRNAs (with 1 or more amino acids incorporated), which drop off the ribosome during protein synthesis, or as a result of ribosome stalling. Catalyzes the release of premature peptidyl moieties from peptidyl-tRNA molecules trapped in stalled 50S ribosomal subunits, and thus maintains levels of free tRNAs and 50S ribosomes. The sequence is that of Peptidyl-tRNA hydrolase from Synechococcus sp. (strain CC9311).